The chain runs to 215 residues: ATP-dependent Clp protease proteolytic subunit (215 aa).

Residue serine 115 is the Nucleophile of the active site. The active site involves histidine 140.

This sequence belongs to the peptidase S14 family. As to quaternary structure, fourteen ClpP subunits assemble into 2 heptameric rings which stack back to back to give a disk-like structure with a central cavity, resembling the structure of eukaryotic proteasomes.

The protein localises to the cytoplasm. The enzyme catalyses Hydrolysis of proteins to small peptides in the presence of ATP and magnesium. alpha-casein is the usual test substrate. In the absence of ATP, only oligopeptides shorter than five residues are hydrolyzed (such as succinyl-Leu-Tyr-|-NHMec, and Leu-Tyr-Leu-|-Tyr-Trp, in which cleavage of the -Tyr-|-Leu- and -Tyr-|-Trp bonds also occurs).. Functionally, cleaves peptides in various proteins in a process that requires ATP hydrolysis. Has a chymotrypsin-like activity. Plays a major role in the degradation of misfolded proteins. This is ATP-dependent Clp protease proteolytic subunit from Anaplasma marginale (strain Florida).